The chain runs to 503 residues: WD repeat-containing protein 55 homolog (503 aa).

A disordered region spans residues 1-131 (MHTHNNFKTP…DSAAFDLDDL (131 aa)). Composition is skewed to acidic residues over residues 12-23 (DADELDDLDDDM) and 37-56 (VGEDESDSDIDEHDLADMEA). A compositionally biased stretch (polar residues) spans 59–76 (PNQNADENESISSDSSFD). Over residues 78–96 (NAEDSSDSDDSMLEEDEAE) the composition is skewed to acidic residues. 6 WD repeats span residues 157–196 (KLEDFITDVCFHPDRDIIALATIIGDVHLYEYGNEGNKLL), 201–242 (VHSK…KLYE), 244–282 (AHDDAINKLHVLDENLFATGDDAGTVKLWDLRTKNPIFE), 285–324 (EVEDQITQMITNDQKKLLLATSADGYLTTFNIAARKLYVQ), 327–366 (PYEEELNCMGIYRGSSKLVVGTSKGKLYSYNWGYFGYHCD), and 411–450 (QHNMPIESLDINTSGELLASSSHNNDVRFWNVKYFEDFGD). Residues 483–503 (TKEDEDNADNNDAAAGPSNSA) form a disordered region.

It belongs to the WD repeat WDR55 family.

This Drosophila pseudoobscura pseudoobscura (Fruit fly) protein is WD repeat-containing protein 55 homolog.